Here is a 544-residue protein sequence, read N- to C-terminus: Probable protein kinase UbiB (544 aa).

One can recognise a Protein kinase domain in the interval 123 to 501 (DFDLVPLASA…KRQQATGKFL (379 aa)). ATP contacts are provided by residues 129 to 137 (LASASIAQV) and lysine 152. Aspartate 287 (proton acceptor) is an active-site residue. 2 consecutive transmembrane segments (helical) span residues 496 to 516 (ATGK…AILV) and 519 to 539 (TYEQ…LFSW).

The protein belongs to the ABC1 family. UbiB subfamily.

Its subcellular location is the cell inner membrane. The protein operates within cofactor biosynthesis; ubiquinone biosynthesis [regulation]. In terms of biological role, is probably a protein kinase regulator of UbiI activity which is involved in aerobic coenzyme Q (ubiquinone) biosynthesis. This is Probable protein kinase UbiB from Vibrio vulnificus (strain YJ016).